A 363-amino-acid chain; its full sequence is Phosphoserine aminotransferase (363 aa).

Position 42 (R42) interacts with L-glutamate. Residues 76–77 (GR), W102, T156, D175, and Q198 contribute to the pyridoxal 5'-phosphate site. An N6-(pyridoxal phosphate)lysine modification is found at K199. Position 240–241 (240–241 (NT)) interacts with pyridoxal 5'-phosphate.

It belongs to the class-V pyridoxal-phosphate-dependent aminotransferase family. SerC subfamily. As to quaternary structure, homodimer. The cofactor is pyridoxal 5'-phosphate.

Its subcellular location is the cytoplasm. It catalyses the reaction O-phospho-L-serine + 2-oxoglutarate = 3-phosphooxypyruvate + L-glutamate. The catalysed reaction is 4-(phosphooxy)-L-threonine + 2-oxoglutarate = (R)-3-hydroxy-2-oxo-4-phosphooxybutanoate + L-glutamate. It functions in the pathway amino-acid biosynthesis; L-serine biosynthesis; L-serine from 3-phospho-D-glycerate: step 2/3. The protein operates within cofactor biosynthesis; pyridoxine 5'-phosphate biosynthesis; pyridoxine 5'-phosphate from D-erythrose 4-phosphate: step 3/5. Functionally, catalyzes the reversible conversion of 3-phosphohydroxypyruvate to phosphoserine and of 3-hydroxy-2-oxo-4-phosphonooxybutanoate to phosphohydroxythreonine. In Shewanella piezotolerans (strain WP3 / JCM 13877), this protein is Phosphoserine aminotransferase.